Here is a 223-residue protein sequence, read N- to C-terminus: Deoxyribose-phosphate aldolase (223 aa).

Catalysis depends on aspartate 89, which acts as the Proton donor/acceptor. Lysine 152 acts as the Schiff-base intermediate with acetaldehyde in catalysis. Lysine 181 acts as the Proton donor/acceptor in catalysis.

This sequence belongs to the DeoC/FbaB aldolase family. DeoC type 1 subfamily.

It localises to the cytoplasm. It carries out the reaction 2-deoxy-D-ribose 5-phosphate = D-glyceraldehyde 3-phosphate + acetaldehyde. Its pathway is carbohydrate degradation; 2-deoxy-D-ribose 1-phosphate degradation; D-glyceraldehyde 3-phosphate and acetaldehyde from 2-deoxy-alpha-D-ribose 1-phosphate: step 2/2. Its function is as follows. Catalyzes a reversible aldol reaction between acetaldehyde and D-glyceraldehyde 3-phosphate to generate 2-deoxy-D-ribose 5-phosphate. The chain is Deoxyribose-phosphate aldolase from Listeria innocua serovar 6a (strain ATCC BAA-680 / CLIP 11262).